The primary structure comprises 325 residues: Glycerol-3-phosphate dehydrogenase [NAD(P)+] (325 aa).

Residues tryptophan 15, arginine 35, and lysine 107 each coordinate NADPH. Positions 107, 135, and 137 each coordinate sn-glycerol 3-phosphate. Alanine 139 lines the NADPH pocket. The sn-glycerol 3-phosphate site is built by lysine 190, aspartate 243, serine 253, arginine 254, and asparagine 255. Residue lysine 190 is the Proton acceptor of the active site. Arginine 254 is an NADPH binding site. Leucine 272 and glutamate 274 together coordinate NADPH.

The protein belongs to the NAD-dependent glycerol-3-phosphate dehydrogenase family.

It localises to the cytoplasm. The enzyme catalyses sn-glycerol 3-phosphate + NAD(+) = dihydroxyacetone phosphate + NADH + H(+). It carries out the reaction sn-glycerol 3-phosphate + NADP(+) = dihydroxyacetone phosphate + NADPH + H(+). Its pathway is membrane lipid metabolism; glycerophospholipid metabolism. Its function is as follows. Catalyzes the reduction of the glycolytic intermediate dihydroxyacetone phosphate (DHAP) to sn-glycerol 3-phosphate (G3P), the key precursor for phospholipid synthesis. This is Glycerol-3-phosphate dehydrogenase [NAD(P)+] from Afipia carboxidovorans (strain ATCC 49405 / DSM 1227 / KCTC 32145 / OM5) (Oligotropha carboxidovorans).